Here is a 764-residue protein sequence, read N- to C-terminus: Probable glutamate--tRNA ligase, cytoplasmic (764 aa).

An L-glutamate-binding site is contributed by 228–230 (RFP). The 'HIGH' region motif lies at 233 to 242 (PSGYMHIGHC). An ATP-binding site is contributed by His238. Residues Asp264, 404–408 (YDFAC), and Arg422 each bind L-glutamate. ATP contacts are provided by residues Glu425 and 460 to 464 (LLSKR). A 'KMSKS' region motif is present at residues 460–464 (LLSKR).

It belongs to the class-I aminoacyl-tRNA synthetase family. Glutamate--tRNA ligase type 2 subfamily.

It is found in the cytoplasm. It carries out the reaction tRNA(Glu) + L-glutamate + ATP = L-glutamyl-tRNA(Glu) + AMP + diphosphate. Functionally, catalyzes the attachment of glutamate to tRNA(Glu) in a two-step reaction: glutamate is first activated by ATP to form Glu-AMP and then transferred to the acceptor end of tRNA(Glu). The sequence is that of Probable glutamate--tRNA ligase, cytoplasmic (gluS) from Dictyostelium discoideum (Social amoeba).